A 96-amino-acid polypeptide reads, in one-letter code: Essential MCU regulator, mitochondrial (96 aa).

A mitochondrion-targeting transit peptide spans 1-34 (MIVSRLTFPLQAAKLVARKAAGNPSNSIIQRRHM). Residues 52–72 (PFGLFAIFCAVIPGLFIGATI) form a helical membrane-spanning segment.

Belongs to the SMDT1/EMRE family.

The protein localises to the mitochondrion inner membrane. Functionally, essential regulatory subunit of the mitochondrial calcium uniporter (mcu) channel, a protein that mediates calcium uptake into mitochondria. The sequence is that of Essential MCU regulator, mitochondrial from Drosophila pseudoobscura pseudoobscura (Fruit fly).